A 525-amino-acid chain; its full sequence is 2,3-bisphosphoglycerate-independent phosphoglycerate mutase (525 aa).

2 residues coordinate Mn(2+): Asp15 and Ser65. Ser65 (phosphoserine intermediate) is an active-site residue. Residues His126, 156-157, Arg188, Arg194, 258-261, and Lys331 contribute to the substrate site; these read RD and RPDR. Asp398, His402, Asp439, His440, and His457 together coordinate Mn(2+).

It belongs to the BPG-independent phosphoglycerate mutase family. As to quaternary structure, monomer. Requires Mn(2+) as cofactor.

It carries out the reaction (2R)-2-phosphoglycerate = (2R)-3-phosphoglycerate. It functions in the pathway carbohydrate degradation; glycolysis; pyruvate from D-glyceraldehyde 3-phosphate: step 3/5. In terms of biological role, catalyzes the interconversion of 2-phosphoglycerate and 3-phosphoglycerate. This chain is 2,3-bisphosphoglycerate-independent phosphoglycerate mutase, found in Picosynechococcus sp. (strain ATCC 27264 / PCC 7002 / PR-6) (Agmenellum quadruplicatum).